A 423-amino-acid polypeptide reads, in one-letter code: F-box protein At1g52495 (423 aa).

Residues 49–95 (KLKDVHLPLDLIVEILKKLPTKSLMRFRCVSKPWSFIISKRRDFVES) form the F-box domain.

This is F-box protein At1g52495 from Arabidopsis thaliana (Mouse-ear cress).